We begin with the raw amino-acid sequence, 449 residues long: Omega-amino acid--pyruvate aminotransferase (449 aa).

Trp60 provides a ligand contact to substrate. Residue 119 to 120 (GS) participates in pyridoxal 5'-phosphate binding. Residue Lys288 is modified to N6-(pyridoxal phosphate)lysine. Thr327 contacts pyridoxal 5'-phosphate. Substrate contacts are provided by Arg414 and Gln421.

This sequence belongs to the class-III pyridoxal-phosphate-dependent aminotransferase family. Homotetramer. It depends on pyridoxal 5'-phosphate as a cofactor.

The enzyme catalyses 3-oxopropanoate + L-alanine = beta-alanine + pyruvate. Its function is as follows. Catalyzes transamination between a variety of omega-amino acids, mono and diamines, and pyruvate. Plays a pivotal role in the metabolism of the omega amino acids. This Pseudomonas putida (Arthrobacter siderocapsulatus) protein is Omega-amino acid--pyruvate aminotransferase.